The primary structure comprises 121 residues: UPF0738 protein BPUM_1088 (121 aa).

The protein belongs to the UPF0738 family.

The polypeptide is UPF0738 protein BPUM_1088 (Bacillus pumilus (strain SAFR-032)).